The sequence spans 470 residues: 3-isopropylmalate dehydratase large subunit (470 aa).

[4Fe-4S] cluster contacts are provided by Cys-351, Cys-411, and Cys-414.

It belongs to the aconitase/IPM isomerase family. LeuC type 1 subfamily. Heterodimer of LeuC and LeuD. [4Fe-4S] cluster is required as a cofactor.

It catalyses the reaction (2R,3S)-3-isopropylmalate = (2S)-2-isopropylmalate. It functions in the pathway amino-acid biosynthesis; L-leucine biosynthesis; L-leucine from 3-methyl-2-oxobutanoate: step 2/4. Its function is as follows. Catalyzes the isomerization between 2-isopropylmalate and 3-isopropylmalate, via the formation of 2-isopropylmaleate. The protein is 3-isopropylmalate dehydratase large subunit of Rhodopseudomonas palustris (strain BisB5).